Here is a 714-residue protein sequence, read N- to C-terminus: Mitochondrial division protein 1 (714 aa).

Residues 240 to 298 (LNIQKNSTLSEIRDIEVEVENLRQKKEKLLGKIANIEQNQLLLEDNLKQIDDRLDFLEE) adopt a coiled-coil conformation. Positions 323 to 354 (LKNDAIRNEGVTTESISSEASNLPPRRRQQLR) are disordered. Over residues 332 to 343 (GVTTESISSEAS) the composition is skewed to polar residues. Position 376 is a phosphoserine (Ser-376). WD repeat units lie at residues 396–436 (THDD…KIGE), 439–478 (GHLATINCMQINRDYGTLVTGGRDAALKLWNLNLAQQLYQ), 500–539 (AHTDEVTALSLDPSFLVSGSQDRTIRQWDLRSGKCLQTID), 561–603 (TQRN…RTLK), 604–642 (GHTDAITSLKFDSACLVTGSYDRTVRIWDLRTGLLNKFH), 644–681 (YSAPVLSLDLFQENAAVVVADEPSVQIYDSEKDESWSC), and 685–714 (GNETSVSTVKYKENYMVEGRENGDVNIWAV).

This sequence belongs to the WD repeat MDV1/CAF4 family. Interacts with CAF4, DNM1 and FIS1, components of the mitochondrial fission machinery. Interacts via its N-terminal, coiled-coil extension (NTE) with FIS1, and via its WD repeats with DNM1.

The protein resides in the mitochondrion outer membrane. In terms of biological role, involved in mitochondrial fission. Has a partially redundant function to CAF4 in acting as an adapter protein, binding to FIS1 on the mitochondrial outer membrane and recruiting the dynamin-like GTPase DNM1 to form mitochondrial fission complexes. Formation of these complexes is required to promote constriction and fission of the mitochondrial compartment at a late step in mitochondrial division. The protein is Mitochondrial division protein 1 (MDV1) of Saccharomyces cerevisiae (strain YJM789) (Baker's yeast).